The primary structure comprises 320 residues: Fructose-1,6-bisphosphatase class 1 (320 aa).

4 residues coordinate Mg(2+): Glu105, Asp124, Leu126, and Asp127. Substrate is bound by residues Asp127–Ser130, Tyr233, and Lys263. A Mg(2+)-binding site is contributed by Glu269.

It belongs to the FBPase class 1 family. Homotetramer. It depends on Mg(2+) as a cofactor.

It localises to the cytoplasm. The catalysed reaction is beta-D-fructose 1,6-bisphosphate + H2O = beta-D-fructose 6-phosphate + phosphate. The protein operates within carbohydrate biosynthesis; gluconeogenesis. This Methanocorpusculum labreanum (strain ATCC 43576 / DSM 4855 / Z) protein is Fructose-1,6-bisphosphatase class 1.